Consider the following 631-residue polypeptide: Phosphomethylpyrimidine synthase (631 aa).

Substrate contacts are provided by residues asparagine 239, methionine 268, tyrosine 297, histidine 333, 353–355 (SRG), 394–397 (DGLR), and glutamate 433. Histidine 437 serves as a coordination point for Zn(2+). Substrate is bound at residue tyrosine 460. Histidine 501 provides a ligand contact to Zn(2+). [4Fe-4S] cluster contacts are provided by cysteine 581, cysteine 584, and cysteine 589.

Belongs to the ThiC family. As to quaternary structure, homodimer. The cofactor is [4Fe-4S] cluster.

The catalysed reaction is 5-amino-1-(5-phospho-beta-D-ribosyl)imidazole + S-adenosyl-L-methionine = 4-amino-2-methyl-5-(phosphooxymethyl)pyrimidine + CO + 5'-deoxyadenosine + formate + L-methionine + 3 H(+). It functions in the pathway cofactor biosynthesis; thiamine diphosphate biosynthesis. Catalyzes the synthesis of the hydroxymethylpyrimidine phosphate (HMP-P) moiety of thiamine from aminoimidazole ribotide (AIR) in a radical S-adenosyl-L-methionine (SAM)-dependent reaction. The polypeptide is Phosphomethylpyrimidine synthase (Escherichia coli O45:K1 (strain S88 / ExPEC)).